Here is a 333-residue protein sequence, read N- to C-terminus: 4-hydroxy-3-methylbut-2-enyl diphosphate reductase (333 aa).

Position 33 (Cys-33) interacts with [4Fe-4S] cluster. Positions 62 and 95 each coordinate (2E)-4-hydroxy-3-methylbut-2-enyl diphosphate. Dimethylallyl diphosphate-binding residues include His-62 and His-95. Residues His-62 and His-95 each contribute to the isopentenyl diphosphate site. Cys-117 lines the [4Fe-4S] cluster pocket. His-145 contributes to the (2E)-4-hydroxy-3-methylbut-2-enyl diphosphate binding site. His-145 is a binding site for dimethylallyl diphosphate. Isopentenyl diphosphate is bound at residue His-145. Glu-147 serves as the catalytic Proton donor. Thr-186 provides a ligand contact to (2E)-4-hydroxy-3-methylbut-2-enyl diphosphate. Position 216 (Cys-216) interacts with [4Fe-4S] cluster. (2E)-4-hydroxy-3-methylbut-2-enyl diphosphate-binding residues include Ser-244, Ser-245, Asn-246, and Ser-289. Dimethylallyl diphosphate is bound by residues Ser-244, Ser-245, Asn-246, and Ser-289. Isopentenyl diphosphate contacts are provided by Ser-244, Ser-245, Asn-246, and Ser-289.

It belongs to the IspH family. The cofactor is [4Fe-4S] cluster.

The catalysed reaction is isopentenyl diphosphate + 2 oxidized [2Fe-2S]-[ferredoxin] + H2O = (2E)-4-hydroxy-3-methylbut-2-enyl diphosphate + 2 reduced [2Fe-2S]-[ferredoxin] + 2 H(+). It catalyses the reaction dimethylallyl diphosphate + 2 oxidized [2Fe-2S]-[ferredoxin] + H2O = (2E)-4-hydroxy-3-methylbut-2-enyl diphosphate + 2 reduced [2Fe-2S]-[ferredoxin] + 2 H(+). Its pathway is isoprenoid biosynthesis; dimethylallyl diphosphate biosynthesis; dimethylallyl diphosphate from (2E)-4-hydroxy-3-methylbutenyl diphosphate: step 1/1. It participates in isoprenoid biosynthesis; isopentenyl diphosphate biosynthesis via DXP pathway; isopentenyl diphosphate from 1-deoxy-D-xylulose 5-phosphate: step 6/6. In terms of biological role, catalyzes the conversion of 1-hydroxy-2-methyl-2-(E)-butenyl 4-diphosphate (HMBPP) into a mixture of isopentenyl diphosphate (IPP) and dimethylallyl diphosphate (DMAPP). Acts in the terminal step of the DOXP/MEP pathway for isoprenoid precursor biosynthesis. This Corynebacterium diphtheriae (strain ATCC 700971 / NCTC 13129 / Biotype gravis) protein is 4-hydroxy-3-methylbut-2-enyl diphosphate reductase.